A 278-amino-acid chain; its full sequence is Tryptophan synthase alpha chain (278 aa).

Residues Glu50 and Asp61 each act as proton acceptor in the active site.

This sequence belongs to the TrpA family. As to quaternary structure, tetramer of two alpha and two beta chains.

The catalysed reaction is (1S,2R)-1-C-(indol-3-yl)glycerol 3-phosphate + L-serine = D-glyceraldehyde 3-phosphate + L-tryptophan + H2O. The protein operates within amino-acid biosynthesis; L-tryptophan biosynthesis; L-tryptophan from chorismate: step 5/5. Functionally, the alpha subunit is responsible for the aldol cleavage of indoleglycerol phosphate to indole and glyceraldehyde 3-phosphate. This is Tryptophan synthase alpha chain from Afipia carboxidovorans (strain ATCC 49405 / DSM 1227 / KCTC 32145 / OM5) (Oligotropha carboxidovorans).